A 251-amino-acid polypeptide reads, in one-letter code: uncharacterized protein (251 aa).

14-37 (VLGGTSAIGLATARRLIARGARLV) is a binding site for NADP(+). Position 145 (S145) interacts with substrate. The Proton acceptor role is filled by Y158.

It belongs to the short-chain dehydrogenases/reductases (SDR) family.

In terms of biological role, may be involved in the biosynthesis of a heptaene-type antibiotic. This is an uncharacterized protein from Streptomyces coelicolor.